Consider the following 357-residue polypeptide: Fructose-bisphosphate aldolase, cytoplasmic isozyme (357 aa).

Residues Arg53 and Lys142 each contribute to the substrate site. Glu183 acts as the Proton acceptor in catalysis. The active-site Schiff-base intermediate with dihydroxyacetone-P is the Lys225.

The protein belongs to the class I fructose-bisphosphate aldolase family.

The protein localises to the cytoplasm. It catalyses the reaction beta-D-fructose 1,6-bisphosphate = D-glyceraldehyde 3-phosphate + dihydroxyacetone phosphate. It participates in carbohydrate degradation; glycolysis; D-glyceraldehyde 3-phosphate and glycerone phosphate from D-glucose: step 4/4. The sequence is that of Fructose-bisphosphate aldolase, cytoplasmic isozyme from Spinacia oleracea (Spinach).